The sequence spans 510 residues: NAD(P)H-quinone oxidoreductase subunit 2, chloroplastic (510 aa).

Transmembrane regions (helical) follow at residues 24-44, 59-79, 99-119, 124-144, 149-169, 183-203, 229-249, 295-315, 323-343, 354-374, 395-415, 418-438, and 484-504; these read LLLF…GLIL, WFYF…LFRW, IFQF…VEYI, MAIT…MFLC, LITI…LSGY, YLLM…WLYG, ISIA…PAPF, WHLL…LIAI, MLAY…IVGD, YMLF…SFGL, ALSL…AGFF, LYLF…MGLL, and MTVC…ILAI.

Belongs to the complex I subunit 2 family. As to quaternary structure, NDH is composed of at least 16 different subunits, 5 of which are encoded in the nucleus.

It is found in the plastid. Its subcellular location is the chloroplast thylakoid membrane. It catalyses the reaction a plastoquinone + NADH + (n+1) H(+)(in) = a plastoquinol + NAD(+) + n H(+)(out). The enzyme catalyses a plastoquinone + NADPH + (n+1) H(+)(in) = a plastoquinol + NADP(+) + n H(+)(out). In terms of biological role, NDH shuttles electrons from NAD(P)H:plastoquinone, via FMN and iron-sulfur (Fe-S) centers, to quinones in the photosynthetic chain and possibly in a chloroplast respiratory chain. The immediate electron acceptor for the enzyme in this species is believed to be plastoquinone. Couples the redox reaction to proton translocation, and thus conserves the redox energy in a proton gradient. The polypeptide is NAD(P)H-quinone oxidoreductase subunit 2, chloroplastic (Sisyrinchium montanum (Strict blue-eyed grass)).